Consider the following 210-residue polypeptide: T-cell surface glycoprotein CD8 beta chain (210 aa).

The N-terminal stretch at 1–21 (MRPRLWLLLAAQLTVLHGNSV) is a signal peptide. The Ig-like V-type domain maps to 22-132 (LQQTPAYIKV…ELTFGKGTQL (111 aa)). Over 22–170 (LQQTPAYIKV…ETQKGPLCSP (149 aa)) the chain is Extracellular. A disulfide bond links C41 and C116. N102 carries an N-linked (GlcNAc...) asparagine glycan. Residues 171-191 (ITLGLLVAGVLVLLVSLGVAI) form a helical membrane-spanning segment. The Cytoplasmic segment spans residues 192–210 (HLCCRRRRARLRFMKQFYK). Y209 is modified (phosphotyrosine).

Forms disulfide-linked heterodimers with CD8A at the cell surface. Interacts with CD3D; this interaction couples TCR-CD3 with CD8. Interacts with LCK. Phosphorylated as a consequence of T-cell activation. In terms of processing, palmitoylated at the cytoplasmic tail and thereby targets the heterodimer CD8A/CD8B to lipid rafts unlike CD8A homodimers. Isoform 1, isoform 3, isoform 5, isoform 6, isoform 7 and isoform 8 are expressed in both thymus and peripheral CD8+ T-cells. Expression of isoform 1 is higher in thymus CD8+ T-cells than in peripheral CD8+ T-cells. Expression of isoform 6 is higher in peripheral CD8+ T-cells than in thymus CD8+ T-cells.

The protein localises to the cell membrane. It is found in the secreted. Integral membrane glycoprotein that plays an essential role in the immune response and serves multiple functions in responses against both external and internal offenses. In T-cells, functions primarily as a coreceptor for MHC class I molecule:peptide complex. The antigens presented by class I peptides are derived from cytosolic proteins while class II derived from extracellular proteins. Interacts simultaneously with the T-cell receptor (TCR) and the MHC class I proteins presented by antigen presenting cells (APCs). In turn, recruits the Src kinase LCK to the vicinity of the TCR-CD3 complex. A palmitoylation site in the cytoplasmic tail of CD8B chain contributes to partitioning of CD8 into the plasma membrane lipid rafts where signaling proteins are enriched. Once LCK recruited, it initiates different intracellular signaling pathways by phosphorylating various substrates ultimately leading to lymphokine production, motility, adhesion and activation of cytotoxic T-lymphocytes (CTLs). Additionally, plays a critical role in thymic selection of CD8+ T-cells. The polypeptide is T-cell surface glycoprotein CD8 beta chain (CD8B) (Homo sapiens (Human)).